Here is a 71-residue protein sequence, read N- to C-terminus: MPTKTITITLEAYERLKREKREGESFSDVIIRLTEKRRDLLEFAGKWKDSGEEIEKIILEGRKEFDKHVLS.

The protein belongs to the UPF0330 family.

Functionally, possibly the antitoxin component of a type II toxin-antitoxin (TA) system. Its cognate toxin is VapC15 (Potential). The sequence is that of Putative antitoxin VapB15 (vapB15) from Archaeoglobus fulgidus (strain ATCC 49558 / DSM 4304 / JCM 9628 / NBRC 100126 / VC-16).